The chain runs to 189 residues: Auxin-responsive protein IAA3 (189 aa).

The short motif at 12–16 (LRLGL) is the EAR-like (transcriptional repression) element. The tract at residues 42 to 65 (TDTEKEIESSSRKTETSPPRKAQI) is disordered. Residues 43-56 (DTEKEIESSSRKTE) show a composition bias toward basic and acidic residues. The PB1 domain occupies 92–179 (GIYVKVSMDG…TCKRLRIMKG (88 aa)).

This sequence belongs to the Aux/IAA family. As to quaternary structure, homodimers and heterodimers. Interacts with TPL. Interacts with TIR1, the F-box component of the Skp1-Cdc53/cullin-F-box (SCFTIR1) E3 ubiquitin ligase complex. Phosphorylated by phytochrome A in vitro. Highly expressed in stems and flowers. Expressed in hypocotyls, cotyledons and leaves, but barely detected in roots. Expressed in root tips. In the root meristem, specifically detected at the vascular tissue transition zone.

Its subcellular location is the nucleus. In terms of biological role, aux/IAA proteins are short-lived transcriptional factors that function as repressors of early auxin response genes at low auxin concentrations. Repression is thought to result from the interaction with auxin response factors (ARFs), proteins that bind to the auxin-responsive promoter element (AuxRE). Plays a central role in auxin regulation of root growth, in gravitropism, and in lateral root formation. Regulated by an auxin-induced protein turnover. Formation of heterodimers with ARF proteins may alter their ability to modulate early auxin response genes expression. When activated by cytokinin, restricts the expression of the PIN genes to the vascular transition zone. Induction of SHY2 in the vascular transition zone restricts BRX expression to down-regulate PIN3 and thus limit meristem growth, but proper SHY2 expression requires BRX. Involved in meristem growth and in determining its size. May participate in strigolactone signaling to regulate meristem size and lateral root formation. This is Auxin-responsive protein IAA3 (IAA3) from Arabidopsis thaliana (Mouse-ear cress).